The following is a 227-amino-acid chain: Cytochrome c oxidase subunit 2 (227 aa).

The Mitochondrial intermembrane segment spans residues 1 to 14 (MAHSFQLGFQDATS). Residues 15-45 (PIMEELLHFHDHTLMIVFLISSLVLYIITLM) form a helical membrane-spanning segment. The Mitochondrial matrix segment spans residues 46 to 59 (LTTKLTHTSTMDAQ). Residues 60–87 (EVETVWTILPAIILILIALPSLRILYLM) form a helical membrane-spanning segment. Over 88–227 (DEINTPSLTV…HFENWSTSMI (140 aa)) the chain is Mitochondrial intermembrane. H161, C196, E198, C200, H204, and M207 together coordinate Cu cation. E198 contributes to the Mg(2+) binding site.

The protein belongs to the cytochrome c oxidase subunit 2 family. As to quaternary structure, component of the cytochrome c oxidase (complex IV, CIV), a multisubunit enzyme composed of 14 subunits. The complex is composed of a catalytic core of 3 subunits MT-CO1, MT-CO2 and MT-CO3, encoded in the mitochondrial DNA, and 11 supernumerary subunits COX4I, COX5A, COX5B, COX6A, COX6B, COX6C, COX7A, COX7B, COX7C, COX8 and NDUFA4, which are encoded in the nuclear genome. The complex exists as a monomer or a dimer and forms supercomplexes (SCs) in the inner mitochondrial membrane with NADH-ubiquinone oxidoreductase (complex I, CI) and ubiquinol-cytochrome c oxidoreductase (cytochrome b-c1 complex, complex III, CIII), resulting in different assemblies (supercomplex SCI(1)III(2)IV(1) and megacomplex MCI(2)III(2)IV(2)). Found in a complex with TMEM177, COA6, COX18, COX20, SCO1 and SCO2. Interacts with TMEM177 in a COX20-dependent manner. Interacts with COX20. Interacts with COX16. Cu cation is required as a cofactor.

The protein resides in the mitochondrion inner membrane. The catalysed reaction is 4 Fe(II)-[cytochrome c] + O2 + 8 H(+)(in) = 4 Fe(III)-[cytochrome c] + 2 H2O + 4 H(+)(out). In terms of biological role, component of the cytochrome c oxidase, the last enzyme in the mitochondrial electron transport chain which drives oxidative phosphorylation. The respiratory chain contains 3 multisubunit complexes succinate dehydrogenase (complex II, CII), ubiquinol-cytochrome c oxidoreductase (cytochrome b-c1 complex, complex III, CIII) and cytochrome c oxidase (complex IV, CIV), that cooperate to transfer electrons derived from NADH and succinate to molecular oxygen, creating an electrochemical gradient over the inner membrane that drives transmembrane transport and the ATP synthase. Cytochrome c oxidase is the component of the respiratory chain that catalyzes the reduction of oxygen to water. Electrons originating from reduced cytochrome c in the intermembrane space (IMS) are transferred via the dinuclear copper A center (CU(A)) of subunit 2 and heme A of subunit 1 to the active site in subunit 1, a binuclear center (BNC) formed by heme A3 and copper B (CU(B)). The BNC reduces molecular oxygen to 2 water molecules using 4 electrons from cytochrome c in the IMS and 4 protons from the mitochondrial matrix. In Cephalopachus bancanus (Western tarsier), this protein is Cytochrome c oxidase subunit 2 (MT-CO2).